An 866-amino-acid polypeptide reads, in one-letter code: Fibrinogen alpha chain (866 aa).

The N-terminal stretch at 1 to 19 is a signal peptide; it reads MFSMRIVCLVLSVVGTAWT. S22 carries the phosphoserine modification. The segment at 36-38 is alpha-chain polymerization, binding distal domain of another fibrin gamma chain; that stretch reads GPR. The residue at position 45 (S45) is a Phosphoserine; by FAM20C. A Phosphoserine modification is found at S50. S56 bears the Phosphoserine; by FAM20C mark. Positions 68–631 form a coiled coil; it reads CRMKGLIDEV…GHAKSRPVRD (564 aa). A disordered region spans residues 262–460; sequence ERPGGNEITR…SGSTTTTRRS (199 aa). Low complexity predominate over residues 270 to 299; it reads TRGGSTSYGTGSETESPRNPSSAGSWNSGS. A phosphoserine mark is found at S281, S291, and S294. T320 carries O-linked (GalNAc...) threonine glycosylation. Residue K322 forms an Isoglutamyl lysine isopeptide (Lys-Gln) (interchain with Q-41 in alpha-2-antiplasmin) linkage. Residue Q347 forms an Isoglutamyl lysine isopeptide (Gln-Lys) (interchain with K-?) linkage. S351 carries an O-linked (GalNAc...) serine glycan. Over residues 354 to 391 the composition is skewed to polar residues; sequence PGSTGTWNPGSSERGSAGHWTSESSVSGSTGQWHSESG. Residue S364 is modified to Phosphoserine; by FAM20C. Q385 participates in a covalent cross-link: Isoglutamyl lysine isopeptide (Gln-Lys) (interchain with K-?). T412 bears the Phosphothreonine mark. Basic and acidic residues predominate over residues 424–449; sequence TRREYHTEKLVTSKGDKELRTGKEKV. Over residues 450–460 the composition is skewed to low complexity; it reads TSGSTTTTRRS. At S451 the chain carries Phosphoserine. A glycan (N-linked (GlcNAc...) asparagine; in variant Caracas-2) is linked at S453. A disulfide bond links C461 and C491. Position 501 is a phosphoserine (S501). T505 carries the post-translational modification Phosphothreonine. Residue S524 is modified to Phosphoserine; by FAM20C. Isoglutamyl lysine isopeptide (Lys-Gln) (interchain with Q-?) cross-links involve residues K527 and K558. Residues 543–638 form a disordered region; it reads ETESRGSESG…VRDCDDVLQT (96 aa). S560 is modified (phosphoserine; by FAM20C). Position 565 is a 4-hydroxyproline; by P4HA1 (P565). Residues K575, K581, and K599 each participate in an isoglutamyl lysine isopeptide (Lys-Gln) (interchain with Q-?) cross-link. A compositionally biased stretch (low complexity) spans 575–589; it reads KSSSYSKQFTSSTSY. The segment covering 594-617 has biased composition (basic and acidic residues); the sequence is STFESKSYKMADEAGSEADHEGTH. At S609 the chain carries Phosphoserine; by FAM20C. A compositionally biased stretch (basic residues) spans 618 to 627; it reads STKRGHAKSR. The Fibrinogen C-terminal domain occupies 623-864; it reads HAKSRPVRDC…AVRMKIRPLV (242 aa). Residue N686 is glycosylated (N-linked (GlcNAc...) asparagine). 4 residues coordinate Ca(2+): D791, D793, W795, and E797. A disulfide bond links C799 and C812.

Heterohexamer; disulfide linked. Contains 2 sets of 3 non-identical chains (alpha, beta and gamma). The 2 heterotrimers are in head to head conformation with the N-termini in a small central domain. In terms of assembly, (Microbial infection) Interacts with Staphylococcus aureus protein Fib; this interaction inhibits fibrinogen-dependent platelet aggregation and protects the bacteria form phagocytosis. The alpha chain is normally not N-glycosylated, even though glycosylation at Asn-686 was observed when a fragment of the protein was expressed in insect cells. It is well known that heterologous expression of isolated domains can lead to adventitious protein modifications. Besides, glycosylation at Asn-686 is supported by large-scale glycoproteomics studies, but the evidence is still quite tenuous. Most likely, Asn-686 is not glycosylated in the healthy human body, or only with low efficiency. In terms of processing, O-glycosylated. Post-translationally, forms F13A-mediated cross-links between a glutamine and the epsilon-amino group of a lysine residue, forming fibronectin-fibrinogen heteropolymers. About one-third of the alpha chains in the molecules in blood were found to be phosphorylated. In terms of processing, conversion of fibrinogen to fibrin is triggered by thrombin, which cleaves fibrinopeptides A and B from alpha and beta chains, and thus exposes the N-terminal polymerization sites responsible for the formation of the soft clot. The soft clot is converted into the hard clot by factor XIIIA which catalyzes the epsilon-(gamma-glutamyl)lysine cross-linking between gamma chains (stronger) and between alpha chains (weaker) of different monomers. Post-translationally, phosphorylated by FAM20C in the extracellular medium. Detected in blood plasma (at protein level).

The protein localises to the secreted. In terms of biological role, cleaved by the protease thrombin to yield monomers which, together with fibrinogen beta (FGB) and fibrinogen gamma (FGG), polymerize to form an insoluble fibrin matrix. Fibrin has a major function in hemostasis as one of the primary components of blood clots. In addition, functions during the early stages of wound repair to stabilize the lesion and guide cell migration during re-epithelialization. Was originally thought to be essential for platelet aggregation, based on in vitro studies using anticoagulated blood. However, subsequent studies have shown that it is not absolutely required for thrombus formation in vivo. Enhances expression of SELP in activated platelets via an ITGB3-dependent pathway. Maternal fibrinogen is essential for successful pregnancy. Fibrin deposition is also associated with infection, where it protects against IFNG-mediated hemorrhage. May also facilitate the immune response via both innate and T-cell mediated pathways. The sequence is that of Fibrinogen alpha chain (FGA) from Homo sapiens (Human).